The primary structure comprises 94 residues: Integration host factor subunit beta (94 aa).

Belongs to the bacterial histone-like protein family. In terms of assembly, heterodimer of an alpha and a beta chain.

Functionally, this protein is one of the two subunits of integration host factor, a specific DNA-binding protein that functions in genetic recombination as well as in transcriptional and translational control. This is Integration host factor subunit beta from Mesorhizobium japonicum (strain LMG 29417 / CECT 9101 / MAFF 303099) (Mesorhizobium loti (strain MAFF 303099)).